The chain runs to 378 residues: Beta-1,3-N-acetylglucosaminyltransferase lunatic fringe (378 aa).

Topologically, residues 1-8 (MLQRCGRR) are cytoplasmic. The helical; Signal-anchor for type II membrane protein transmembrane segment at 9 to 29 (LLLALVGALLACLLVLTADPP) threads the bilayer. Over 30–378 (PTPMPAERGR…TPWCPRSAIF (349 aa)) the chain is Lumenal. Positions 85–108 (RDADPPPGVASRQGDGHPRPPAEV) are disordered. R128 is a substrate binding site. Residue N166 is glycosylated (N-linked (GlcNAc...) asparagine). Intrachain disulfides connect C167–C178 and C196–C259. D200 serves as a coordination point for substrate. D201 contacts Mn(2+). D289 is a catalytic residue. Residue H313 participates in Mn(2+) binding. C363 and C372 form a disulfide bridge.

It belongs to the glycosyltransferase 31 family. It depends on Mn(2+) as a cofactor. Co(2+) is required as a cofactor. Post-translationally, a soluble form may be derived from the membrane form by proteolytic processing. In terms of tissue distribution, detected at 12.5 dpc in all tissues examined with the highest level observed in adult brain and spleen. Detected in the dental epithelium.

The protein resides in the golgi apparatus. It localises to the golgi apparatus membrane. It catalyses the reaction 3-O-(alpha-L-fucosyl)-L-threonyl-[EGF-like domain protein] + UDP-N-acetyl-alpha-D-glucosamine = 3-O-(N-acetyl-beta-D-glucosaminyl-(1-&gt;3)-alpha-L-fucosyl)-L-threonyl-[EGF-like domain protein] + UDP + H(+). The enzyme catalyses 3-O-(alpha-L-fucosyl)-L-seryl-[EGF-like domain protein] + UDP-N-acetyl-alpha-D-glucosamine = 3-O-(N-acetyl-beta-D-glucosaminyl-(1-&gt;3)-alpha-L-fucosyl)-L-seryl-[EGF-like domain protein] + UDP + H(+). In terms of biological role, glycosyltransferase that initiates the elongation of O-linked fucose residues attached to EGF-like repeats in the extracellular domain of Notch molecules. Modulates NOTCH1 activity by modifying O-fucose residues at specific EGF-like domains resulting in inhibition of NOTCH1 activation by JAG1 and enhancement of NOTCH1 activation by DLL1 via an increase in its binding to DLL1. Decreases the binding of JAG1 to NOTCH2 but not that of DLL1. Essential mediator of somite segmentation and patterning. During somite boundary formation, it restricts Notch activity in the presomitic mesoderm to a boundary-forming territory in the posterior half of the prospective somite. In this region, Notch function activates a set of genes that are involved in boundary formation and in anterior-posterior somite identity. Ectopically expressed in the thymus, Lfgn inhibits Notch signaling which results in inhibition of T-cell commitment and promotes B-cell development in lymphoid progenitors. May play a role in boundary formation of the enamel knot. In Mus musculus (Mouse), this protein is Beta-1,3-N-acetylglucosaminyltransferase lunatic fringe.